The following is a 140-amino-acid chain: Gonadotropin subunit beta-2 (140 aa).

Positions 1–23 are cleaved as a signal peptide; the sequence is MGTPVKILVVLFSVIVLLAVAQS. 6 disulfides stabilise this stretch: Cys-29/Cys-77, Cys-43/Cys-92, Cys-46/Cys-130, Cys-54/Cys-108, Cys-58/Cys-110, and Cys-113/Cys-120. Asn-33 carries an N-linked (GlcNAc...) asparagine glycan.

This sequence belongs to the glycoprotein hormones subunit beta family. As to quaternary structure, heterodimer of an alpha and a beta chain.

The protein localises to the secreted. In terms of biological role, involved in gametogenesis and steroidogenesis. This chain is Gonadotropin subunit beta-2 (cgbb), found in Carassius auratus (Goldfish).